A 148-amino-acid polypeptide reads, in one-letter code: MKVIFLKDVKGKGKKGEVKNVPDGYANNFLLKQGLAAEATNSSMKTLEAQKRKEEKDAAAELESAKQLKETLEKLTVELKAKSGEGGRLFGSITSKQIVDAMQKSHKIKLDKRKFEMDDAIRALGYTNVTVKLHPQVTATVKVHVSEQ.

The protein belongs to the bacterial ribosomal protein bL9 family.

Functionally, binds to the 23S rRNA. The protein is Large ribosomal subunit protein bL9 of Bacillus thuringiensis subsp. konkukian (strain 97-27).